The following is a 2662-amino-acid chain: Centrosome-associated protein CEP250L1 (2662 aa).

Coiled coils occupy residues 1030-1248 and 1281-1719; these read KVHY…EEEE and ARTH…IDAQ.

It localises to the cytoplasm. Its subcellular location is the cytoskeleton. The protein localises to the microtubule organizing center. It is found in the centrosome. Its function is as follows. Part of the centrosome inner core complex. Plays a role in the formation and/or stabilization of the mitotic spindle. Required for proper nuclear segregation and DNA partitioning during cell division. This is Centrosome-associated protein CEP250L1 from Toxoplasma gondii (strain ATCC 50611 / Me49).